Reading from the N-terminus, the 141-residue chain is Hemoglobin subunit alpha (141 aa).

Residues 1-141 (VLSASDKTNL…VSTVLTSKYR (141 aa)) form the Globin domain. Ser3 bears the Phosphoserine mark. Lys7 is subject to N6-succinyllysine. Thr8 carries the phosphothreonine modification. Lys11 carries the post-translational modification N6-succinyllysine. An N6-acetyllysine; alternate modification is found at Lys16. Lys16 carries the N6-succinyllysine; alternate modification. Residue Tyr24 is modified to Phosphotyrosine. A Phosphoserine modification is found at Ser35. Lys40 is modified (N6-succinyllysine). Ser49 carries the post-translational modification Phosphoserine. Residue His58 coordinates O2. His87 lines the heme b pocket. Residue Ser102 is modified to Phosphoserine. Position 108 is a phosphothreonine (Thr108). Ser124 carries the phosphoserine modification. Residues Thr134 and Thr137 each carry the phosphothreonine modification. The residue at position 138 (Ser138) is a Phosphoserine.

Belongs to the globin family. As to quaternary structure, heterotetramer of two alpha chains and two beta chains. In terms of tissue distribution, red blood cells.

In terms of biological role, involved in oxygen transport from the lung to the various peripheral tissues. The protein is Hemoglobin subunit alpha of Blarina brevicauda (Northern short-tailed shrew).